A 153-amino-acid chain; its full sequence is MPRGSRSRTSRVTPPASRAPQMRAAPRRAPAAQPPAAAAPSAVGSPAAAPRQPGLMAQMATTAAGVAVGSAVGHTLGHAITGGFSGGGSAEPAKPDITYQEPQGAQLQNQQSFGPCSLEIKQFLECAQNQSDVKLCEGFNEVLRQCRIANGLM.

Disordered regions lie at residues 1 to 51 (MPRG…AAPR) and 78 to 106 (HAIT…QGAQ). Positions 14–51 (PPASRAPQMRAAPRRAPAAQPPAAAAPSAVGSPAAAPR) are enriched in low complexity. One can recognise a CHCH domain in the interval 113–153 (FGPCSLEIKQFLECAQNQSDVKLCEGFNEVLRQCRIANGLM). Short sequence motifs (cx9C motif) lie at residues 116-126 (CSLEIKQFLEC) and 136-146 (CEGFNEVLRQC). 2 disulfide bridges follow: Cys-116–Cys-146 and Cys-126–Cys-136.

Interacts with RBPJ.

The protein resides in the nucleus. It is found in the mitochondrion. It localises to the mitochondrion intermembrane space. Transcription factor. Binds to the oxygen responsive element of COX4I2 and activates its transcription under hypoxia conditions (4% oxygen), as well as normoxia conditions (20% oxygen). The protein is Coiled-coil-helix-coiled-coil-helix domain-containing protein 2 (Chchd2) of Mus musculus (Mouse).